A 378-amino-acid polypeptide reads, in one-letter code: Anhydro-N-acetylmuramic acid kinase (378 aa).

9-16 (GTSADGID) is an ATP binding site.

It belongs to the anhydro-N-acetylmuramic acid kinase family.

The enzyme catalyses 1,6-anhydro-N-acetyl-beta-muramate + ATP + H2O = N-acetyl-D-muramate 6-phosphate + ADP + H(+). The protein operates within amino-sugar metabolism; 1,6-anhydro-N-acetylmuramate degradation. Its pathway is cell wall biogenesis; peptidoglycan recycling. Its function is as follows. Catalyzes the specific phosphorylation of 1,6-anhydro-N-acetylmuramic acid (anhMurNAc) with the simultaneous cleavage of the 1,6-anhydro ring, generating MurNAc-6-P. Is required for the utilization of anhMurNAc either imported from the medium or derived from its own cell wall murein, and thus plays a role in cell wall recycling. The sequence is that of Anhydro-N-acetylmuramic acid kinase from Synechococcus sp. (strain ATCC 27144 / PCC 6301 / SAUG 1402/1) (Anacystis nidulans).